Reading from the N-terminus, the 381-residue chain is Chaperone protein DnaJ (381 aa).

A J domain is found at 5–73 (DYYEVLGVGK…EKKAAYDQYG (69 aa)). A CR-type zinc finger spans residues 141-219 (GHEAQIRVPH…CHGQGKLKSQ (79 aa)). Cysteine 154, cysteine 157, cysteine 171, cysteine 174, cysteine 193, cysteine 196, cysteine 207, and cysteine 210 together coordinate Zn(2+). CXXCXGXG motif repeat units lie at residues 154 to 161 (CDHCHGNG), 171 to 178 (CPTCHGAG), 193 to 200 (CPKCHGSG), and 207 to 214 (CTKCHGQG). The interval 357-381 (SVHEGGSRHSPQEQSWLDKVKSFFS) is disordered.

The protein belongs to the DnaJ family. In terms of assembly, homodimer. Requires Zn(2+) as cofactor.

Its subcellular location is the cytoplasm. Functionally, participates actively in the response to hyperosmotic and heat shock by preventing the aggregation of stress-denatured proteins and by disaggregating proteins, also in an autonomous, DnaK-independent fashion. Unfolded proteins bind initially to DnaJ; upon interaction with the DnaJ-bound protein, DnaK hydrolyzes its bound ATP, resulting in the formation of a stable complex. GrpE releases ADP from DnaK; ATP binding to DnaK triggers the release of the substrate protein, thus completing the reaction cycle. Several rounds of ATP-dependent interactions between DnaJ, DnaK and GrpE are required for fully efficient folding. Also involved, together with DnaK and GrpE, in the DNA replication of plasmids through activation of initiation proteins. This Cupriavidus necator (strain ATCC 17699 / DSM 428 / KCTC 22496 / NCIMB 10442 / H16 / Stanier 337) (Ralstonia eutropha) protein is Chaperone protein DnaJ.